We begin with the raw amino-acid sequence, 429 residues long: Adenylosuccinate synthetase (429 aa).

GTP contacts are provided by residues 12 to 18 (GDEGKGK) and 40 to 42 (GHT). Asp-13 (proton acceptor) is an active-site residue. Residues Asp-13 and Gly-40 each contribute to the Mg(2+) site. Residues 13-16 (DEGK), 38-41 (NAGH), Thr-128, Arg-142, Gln-223, Thr-238, and Arg-302 contribute to the IMP site. The Proton donor role is filled by His-41. Residue 298-304 (VNTGRPR) coordinates substrate. GTP is bound by residues Arg-304, 330-332 (KLD), and 412-414 (GVG).

It belongs to the adenylosuccinate synthetase family. In terms of assembly, homodimer. Mg(2+) serves as cofactor.

It is found in the cytoplasm. The catalysed reaction is IMP + L-aspartate + GTP = N(6)-(1,2-dicarboxyethyl)-AMP + GDP + phosphate + 2 H(+). It functions in the pathway purine metabolism; AMP biosynthesis via de novo pathway; AMP from IMP: step 1/2. Its function is as follows. Plays an important role in the de novo pathway of purine nucleotide biosynthesis. Catalyzes the first committed step in the biosynthesis of AMP from IMP. The polypeptide is Adenylosuccinate synthetase (Paenarthrobacter aurescens (strain TC1)).